The sequence spans 140 residues: Ribonuclease P protein component (140 aa).

The protein belongs to the RnpA family. In terms of assembly, consists of a catalytic RNA component (M1 or rnpB) and a protein subunit.

The catalysed reaction is Endonucleolytic cleavage of RNA, removing 5'-extranucleotides from tRNA precursor.. Functionally, RNaseP catalyzes the removal of the 5'-leader sequence from pre-tRNA to produce the mature 5'-terminus. It can also cleave other RNA substrates such as 4.5S RNA. The protein component plays an auxiliary but essential role in vivo by binding to the 5'-leader sequence and broadening the substrate specificity of the ribozyme. The polypeptide is Ribonuclease P protein component (Ralstonia pickettii (strain 12J)).